The primary structure comprises 1157 residues: Pesticidal crystal protein Cry9Ca (1157 aa).

The protein belongs to the delta endotoxin family.

Promotes colloidosmotic lysis by binding to the midgut epithelial cells of Lepidoptera larvae. Has a fairly broad spectrum of activity against members of the Pyralidae, Plutellidae, Sphingidae and Noctuidae families. It was the first insecticidal crystal protein characterized with activity against cutworms. No activity is observed against some beetles, such as the Colorado potato beetle. This Bacillus thuringiensis subsp. tolworthi protein is Pesticidal crystal protein Cry9Ca (cry9Ca).